Reading from the N-terminus, the 413-residue chain is Succinate--CoA ligase [ADP-forming] subunit beta, mitochondrial (413 aa).

The N-terminal 2 residues, 1-2 (RR), are a transit peptide targeting the mitochondrion. The ATP-grasp domain maps to 11 to 238 (MGLLQEAGIS…SNSAYRQKKI (228 aa)). Residues Lys-48 and 55–57 (GRG) each bind ATP. Asn-208 and Asp-222 together coordinate Mg(2+). Substrate contacts are provided by residues Asn-273 and 330 to 332 (GIM).

This sequence belongs to the succinate/malate CoA ligase beta subunit family. ATP-specific subunit beta subfamily. Heterodimer of an alpha and a beta subunit. The beta subunit determines specificity for ATP. It depends on Mg(2+) as a cofactor. In terms of tissue distribution, widely expressed. Not present in liver.

It localises to the mitochondrion. It carries out the reaction succinate + ATP + CoA = succinyl-CoA + ADP + phosphate. The protein operates within carbohydrate metabolism; tricarboxylic acid cycle; succinate from succinyl-CoA (ligase route): step 1/1. ATP-specific succinyl-CoA synthetase functions in the citric acid cycle (TCA), coupling the hydrolysis of succinyl-CoA to the synthesis of ATP and thus represents the only step of substrate-level phosphorylation in the TCA. The beta subunit provides nucleotide specificity of the enzyme and binds the substrate succinate, while the binding sites for coenzyme A and phosphate are found in the alpha subunit. This Columba livia (Rock dove) protein is Succinate--CoA ligase [ADP-forming] subunit beta, mitochondrial.